The primary structure comprises 363 residues: HAUS augmin-like complex subunit 4 (363 aa).

It belongs to the HAUS4 family. In terms of assembly, component of the HAUS augmin-like complex. The complex interacts with the gamma-tubulin ring complex and this interaction is required for spindle assembly. Interacts with EML3 (phosphorylated at 'Thr-881').

It localises to the cytoplasm. The protein resides in the cytoskeleton. Its subcellular location is the microtubule organizing center. It is found in the centrosome. The protein localises to the spindle. Its function is as follows. Contributes to mitotic spindle assembly, maintenance of centrosome integrity and completion of cytokinesis as part of the HAUS augmin-like complex. This chain is HAUS augmin-like complex subunit 4 (HAUS4), found in Homo sapiens (Human).